The following is a 139-amino-acid chain: Putative pre-16S rRNA nuclease (139 aa).

It belongs to the YqgF nuclease family.

The protein localises to the cytoplasm. In terms of biological role, could be a nuclease involved in processing of the 5'-end of pre-16S rRNA. The chain is Putative pre-16S rRNA nuclease from Haemophilus influenzae (strain 86-028NP).